The chain runs to 446 residues: Protein odr-4 homolog (446 aa).

Residues 76-96 (ASQVGRMLPGGLMVLGVFLMT) traverse the membrane as a helical segment. A compositionally biased stretch (basic and acidic residues) spans 394-415 (HPEKRESEPASQHLESKPENKA). A disordered region spans residues 394 to 417 (HPEKRESEPASQHLESKPENKARS). The chain crosses the membrane as a helical span at residues 426–446 (GLVISTIVASIAIIISFYYIM).

Belongs to the ODR-4 family.

It is found in the membrane. Its function is as follows. May play a role in the trafficking of a subset of G-protein coupled receptors. This chain is Protein odr-4 homolog (odr4), found in Xenopus laevis (African clawed frog).